The chain runs to 881 residues: MLRSLLLLAPLVGAAVLGVRDNSQECPGYKATNIREGRNSLTADLTLAGTPCNTYGTDLKNLKLLVEYQTDKRLHVKIYDADEEVYQVPESVLPRVDGKGGSGKKSALKFDYQANPFSFKVKRGGEVLFDTSGSNLIFQSQYLNLRTWLPEDPNLYGLGEHTDSLRLETTNYTRTLWNRDAYAIPEKTNLYGTHPVYYDHRGQDGTHGVFLLNSNGMDIKIDKTEDGKQYLEYNTLGGVFDFYFFTGATPKDASIEYAKVVGLPAMQSYWTFGFHQCRYGYRDVFEVAEVVYNYTQAKIPLETMWTDIDYMDRRRVFTLDPERFPLEKLRELVTYLHNHNQRYIVMVDPAVSVSDNVGYNDGMEQGIFLQTQNGSLYKGAVWPGVTAYPDWFHPDIQKYWNDQFAKFFDRKTGVDIDGLWIDMNEAANFCPYPCSDPEGYSRDNDLPPAAPPVRPSNPRPLPGFPGDFQPSSSSKRSTKGSKVGLPNRDLINPPYMIRNEAGSLSNKTINTDIIHAGEGYAEYDTHNLYGTMMSSASRNAMQHRRPEVRPLVITRSTYAGAGAHVGHWLGDNISEWSKYRVSIAQMLAFASMFQVPMIGSDVCGFGGNTTEELCARWARLGAFYTFFRNHNEITGIPQEFYRWPTVAESARKAIDIRYRLLDYIYTAFHRQTQTGEPFLQPMFYLYPKDKNTFSNQLQFFYGDAILVSPVTDGSQTSVDAYFPDDIFYDWHTGAALRGRGANVTLGNIDVTEIPIHIRGGSIIPIRSESAMTTTELRKKGFELIIAPGLDGTASGSLYLDDGDSIEQRATLELEFTYRKGRLRVKGKFGFRTDVKINAVTLLGQSAPASKSGSVASFDSGRQAVTIKTSLDLTGPSEIDLN.

An N-terminal signal peptide occupies residues 1–14; sequence MLRSLLLLAPLVGA. 3 N-linked (GlcNAc...) asparagine glycosylation sites follow: Asn-171, Asn-293, and Asn-373. Catalysis depends on Asp-422, which acts as the Nucleophile. Residue Glu-425 is part of the active site. Residues 440–485 are disordered; that stretch reads YSRDNDLPPAAPPVRPSNPRPLPGFPGDFQPSSSSKRSTKGSKVGL. The span at 448-463 shows a compositional bias: pro residues; the sequence is PAAPPVRPSNPRPLPG. N-linked (GlcNAc...) asparagine glycosylation occurs at Asn-506. Asp-571 serves as the catalytic Proton donor. N-linked (GlcNAc...) asparagine glycans are attached at residues Asn-572, Asn-608, and Asn-742.

Belongs to the glycosyl hydrolase 31 family.

The protein localises to the secreted. The enzyme catalyses Hydrolysis of terminal, non-reducing (1-&gt;4)-linked alpha-D-glucose residues with release of alpha-D-glucose.. It carries out the reaction Hydrolysis of terminal, non-reducing beta-D-glucosyl residues with release of beta-D-glucose.. In terms of biological role, glucosidase involved in the degradation of cellulosic biomass. Has both alpha- and beta-glucosidase activity. The sequence is that of Probable alpha/beta-glucosidase agdC (agdC) from Neosartorya fischeri (strain ATCC 1020 / DSM 3700 / CBS 544.65 / FGSC A1164 / JCM 1740 / NRRL 181 / WB 181) (Aspergillus fischerianus).